Here is a 251-residue protein sequence, read N- to C-terminus: Esterase mlcF (251 aa).

Active-site charge relay system residues include Ser-126, Asp-193, and His-221.

It belongs to the LovG family.

The catalysed reaction is dihydro-ML-236C-[compactin nonaketide synthase] + H2O = holo-[compactin nonaketide synthase] + dihydro-ML-236C carboxylate + H(+). It functions in the pathway polyketide biosynthesis. Its function is as follows. Esterase; part of the gene cluster that mediates the biosynthesis of compactin, also known as mevastatin or ML-236B, and which acts as a potent competitive inhibitor of HMG-CoA reductase. Compactin biosynthesis is performed in two stages. The first stage is catalyzed by the nonaketide synthase mlcA, which belongs to type I polyketide synthases and catalyzes the iterative nine-step formation of the polyketide. This PKS stage is completed by the action of dehydrogenase mlcG, which catalyzes the NADPH-dependent reduction of the unsaturated tetra-, penta- and heptaketide intermediates that arise during the mlcA-mediated biosynthesis of the nonaketide chain and leads to dihydro-ML-236C carboxylate. Covalently bound dihydro-ML-236C carboxylate is released from mlcA by the mlcF esterase. Conversion of dihydro-ML-236C carboxylate into ML-236A carboxylate is subsequently performed with the participation of molecular oxygen and P450 monoogygenase mlcC. Finally, mlcH performs the conversion of ML-236A carboxylate to ML-236B/compactin carboxylate through the addition of the side-chain diketide moiety produced by the diketide synthase mlcB. This is Esterase mlcF from Penicillium citrinum.